The sequence spans 309 residues: Protein FdhE (309 aa).

It belongs to the FdhE family.

The protein localises to the cytoplasm. Necessary for formate dehydrogenase activity. The chain is Protein FdhE from Escherichia coli (strain K12 / MC4100 / BW2952).